Reading from the N-terminus, the 447-residue chain is Phosphoglucosamine mutase (447 aa).

The active-site Phosphoserine intermediate is S104. Residues S104, D243, D245, and D247 each coordinate Mg(2+). At S104 the chain carries Phosphoserine.

Belongs to the phosphohexose mutase family. It depends on Mg(2+) as a cofactor. Activated by phosphorylation.

It carries out the reaction alpha-D-glucosamine 1-phosphate = D-glucosamine 6-phosphate. Functionally, catalyzes the conversion of glucosamine-6-phosphate to glucosamine-1-phosphate. The chain is Phosphoglucosamine mutase from Corynebacterium glutamicum (strain R).